Consider the following 862-residue polypeptide: Probable alpha,alpha-trehalose-phosphate synthase [UDP-forming] 11 (862 aa).

A Phosphoserine modification is found at S5. Positions 50 to 538 (PKRIVVSNQL…ARSYDQDLQR (489 aa)) are glycosyltransferase. Positions 838-862 (SKHEQQKKQSKFTFQQPMGQCRKKA) are disordered.

The protein in the N-terminal section; belongs to the glycosyltransferase 20 family. It in the C-terminal section; belongs to the trehalose phosphatase family. As to expression, expressed in leaves, roots, stems and flowers.

It carries out the reaction D-glucose 6-phosphate + UDP-alpha-D-glucose = alpha,alpha-trehalose 6-phosphate + UDP + H(+). This chain is Probable alpha,alpha-trehalose-phosphate synthase [UDP-forming] 11 (TPS11), found in Arabidopsis thaliana (Mouse-ear cress).